Reading from the N-terminus, the 261-residue chain is Lysosome-associated membrane glycoprotein 5 (261 aa).

The first 29 residues, Met1–Ala29, serve as a signal peptide directing secretion. Residues Glu30–Glu234 lie on the Extracellular side of the membrane. N-linked (GlcNAc...) asparagine glycosylation is found at Asn35, Asn53, and Asn126. Residues Thr235 to Tyr255 form a helical membrane-spanning segment. Residues His256–Lys261 lie on the Cytoplasmic side of the membrane.

This sequence belongs to the LAMP family. Post-translationally, glycosylated.

It is found in the cytoplasmic vesicle membrane. The protein resides in the cell membrane. It localises to the cell projection. The protein localises to the dendrite. Its subcellular location is the cytoplasmic vesicle. It is found in the secretory vesicle. The protein resides in the synaptic vesicle membrane. It localises to the growth cone membrane. The protein localises to the early endosome membrane. Its subcellular location is the recycling endosome. It is found in the endoplasmic reticulum-Golgi intermediate compartment membrane. The protein resides in the endosome membrane. Plays a role in short-term synaptic plasticity in a subset of GABAergic neurons in the brain. In Pongo abelii (Sumatran orangutan), this protein is Lysosome-associated membrane glycoprotein 5 (LAMP5).